The chain runs to 84 residues: Delta-stichotoxin-Shd3a (84 aa).

The N-terminal stretch at 1–19 (MAYLKIVLVALMLVLGVSA) is a signal peptide. Residues 20–33 (MRLSDQEDQDVSVV) constitute a propeptide that is removed on maturation. 3 cysteine pairs are disulfide-bonded: Cys-38-Cys-78, Cys-40-Cys-68, and Cys-61-Cys-79. Lys-83 is modified (lysine amide).

It belongs to the sea anemone sodium channel inhibitory toxin family. Type II subfamily.

The protein resides in the secreted. The protein localises to the nematocyst. Functionally, binds specifically to voltage-gated sodium channels (Nav), thereby delaying their inactivation during signal transduction. The sequence is that of Delta-stichotoxin-Shd3a from Stichodactyla haddoni (Saddle carpet anemone).